A 132-amino-acid chain; its full sequence is uncharacterized protein (132 aa).

4 helical membrane passes run 15–37 (FPEY…LLLY), 49–71 (AFIP…LRLF), 81–103 (VILT…LALV), and 110–129 (LAAT…MAFV).

The protein localises to the cell membrane. This is an uncharacterized protein from Archaeoglobus fulgidus (strain ATCC 49558 / DSM 4304 / JCM 9628 / NBRC 100126 / VC-16).